Here is a 455-residue protein sequence, read N- to C-terminus: Ribulose bisphosphate carboxylase large chain (455 aa).

An N6,N6,N6-trimethyllysine modification is found at lysine 5. Substrate contacts are provided by asparagine 114 and threonine 164. Residue lysine 166 is the Proton acceptor of the active site. Lysine 168 lines the substrate pocket. Lysine 192, aspartate 194, and glutamate 195 together coordinate Mg(2+). Lysine 192 carries the post-translational modification N6-carboxylysine. Histidine 285 acts as the Proton acceptor in catalysis. The substrate site is built by arginine 286, histidine 318, and serine 370.

This sequence belongs to the RuBisCO large chain family. Type I subfamily. Heterohexadecamer of 8 large chains and 8 small chains; disulfide-linked. The disulfide link is formed within the large subunit homodimers. The cofactor is Mg(2+). In terms of processing, the disulfide bond which can form in the large chain dimeric partners within the hexadecamer appears to be associated with oxidative stress and protein turnover.

It localises to the plastid. It is found in the chloroplast. The enzyme catalyses 2 (2R)-3-phosphoglycerate + 2 H(+) = D-ribulose 1,5-bisphosphate + CO2 + H2O. The catalysed reaction is D-ribulose 1,5-bisphosphate + O2 = 2-phosphoglycolate + (2R)-3-phosphoglycerate + 2 H(+). Its function is as follows. RuBisCO catalyzes two reactions: the carboxylation of D-ribulose 1,5-bisphosphate, the primary event in carbon dioxide fixation, as well as the oxidative fragmentation of the pentose substrate in the photorespiration process. Both reactions occur simultaneously and in competition at the same active site. This chain is Ribulose bisphosphate carboxylase large chain, found in Lupinus arcticus (Arctic lupine).